The sequence spans 379 residues: Cytochrome b (379 aa).

Transmembrane regions (helical) follow at residues 34-54 (FGSLLGICLITQILTGLLLAM), 78-99 (WLIRNLHANGASFFFICIYLHI), 114-134 (WNTGVVLLLTLMATAFVGYVL), and 179-199 (FFALHFLLPFLIAGITLIHLT). Residues histidine 84 and histidine 98 each contribute to the heme b site. Residues histidine 183 and histidine 197 each coordinate heme b. Histidine 202 is an a ubiquinone binding site. The next 4 helical transmembrane spans lie at 227 to 247 (LKDALGFALMFIPLLTLAFFS), 289 to 309 (LGGVLALAASVLILFLIPFLH), 321 to 341 (LSQILFWLLVANLLILTWIGS), and 348 to 368 (FIIIGQMASFSYFLILLVLFP).

It belongs to the cytochrome b family. In terms of assembly, the cytochrome bc1 complex contains 11 subunits: 3 respiratory subunits (MT-CYB, CYC1 and UQCRFS1), 2 core proteins (UQCRC1 and UQCRC2) and 6 low-molecular weight proteins (UQCRH/QCR6, UQCRB/QCR7, UQCRQ/QCR8, UQCR10/QCR9, UQCR11/QCR10 and a cleavage product of UQCRFS1). This cytochrome bc1 complex then forms a dimer. Heme b serves as cofactor.

The protein localises to the mitochondrion inner membrane. Functionally, component of the ubiquinol-cytochrome c reductase complex (complex III or cytochrome b-c1 complex) that is part of the mitochondrial respiratory chain. The b-c1 complex mediates electron transfer from ubiquinol to cytochrome c. Contributes to the generation of a proton gradient across the mitochondrial membrane that is then used for ATP synthesis. The sequence is that of Cytochrome b (MT-CYB) from Rhea americana (Greater rhea).